The primary structure comprises 299 residues: ATP phosphoribosyltransferase (299 aa).

It belongs to the ATP phosphoribosyltransferase family. Long subfamily. Requires Mg(2+) as cofactor.

It localises to the cytoplasm. The catalysed reaction is 1-(5-phospho-beta-D-ribosyl)-ATP + diphosphate = 5-phospho-alpha-D-ribose 1-diphosphate + ATP. It functions in the pathway amino-acid biosynthesis; L-histidine biosynthesis; L-histidine from 5-phospho-alpha-D-ribose 1-diphosphate: step 1/9. Its activity is regulated as follows. Feedback inhibited by histidine. Catalyzes the condensation of ATP and 5-phosphoribose 1-diphosphate to form N'-(5'-phosphoribosyl)-ATP (PR-ATP). Has a crucial role in the pathway because the rate of histidine biosynthesis seems to be controlled primarily by regulation of HisG enzymatic activity. The chain is ATP phosphoribosyltransferase from Shewanella denitrificans (strain OS217 / ATCC BAA-1090 / DSM 15013).